Reading from the N-terminus, the 635-residue chain is MIICYSCLTVSILLTIKFVPCRFAGIEHQNTKSRVHFSLLDSRQENDTNHFEIAEAKFQKPHNEENTIGTITKFAPSVQEQHSSAVIPMPHFDQNRLEQALRIKGSIDGTEEALYRSLLDHTVYEKDVRPCIHHSQPTNVTFGFLLNQIVEMDERNQALTTRSWLNINWMDPRLSWNESLWSEIKAIYIPHARIWKPDIILVNNAIREYYASLVSTDVMVTSDGNVTWLFSALFRSSCPIRVRYYPFDDQQCDLKFASWSHDITEINLGLNTDKGDLSSYMNNSEFDLVDMTAVREVVTFPSDTNSDWPIIVIRIHMHRRPLFYVFNHIVPCVLISSMAVLGFLMPPETGEKINMIITTLLSMGVYLQSITESIPPTSEGVPLIGMYYVSSLLMVCLATCVNVITLNMHRNGAANQGRHVPAWMQKWILGYLATFMRMSIREPDSIALLKASQSKKSTIRRSSILRDLKRVKNMSNVRAKSKEQNANRECECMDPLVHIYAESIMSCLAADTKPMNGSTIREDFASESTFLGRVVSDGIMPRISASSNSVLTEFETRFRRILKRVYRSLQQHEIREEILDERSRIQWQWQQLASVVDRLLLCLFCTATLFTIICLLIVPVAYRDNDSMLSFLNFF.

Positions 1–24 (MIICYSCLTVSILLTIKFVPCRFA) are cleaved as a signal peptide. Topologically, residues 25–324 (GIEHQNTKSR…IHMHRRPLFY (300 aa)) are extracellular. Residues asparagine 46, asparagine 139, asparagine 177, and asparagine 225 are each glycosylated (N-linked (GlcNAc...) asparagine). A disulfide bridge links cysteine 238 with cysteine 252. A glycan (N-linked (GlcNAc...) asparagine) is linked at asparagine 282. A run of 3 helical transmembrane segments spans residues 325–345 (VFNH…GFLM), 355–375 (MIIT…ESIP), and 381–401 (VPLI…ATCV). The Cytoplasmic portion of the chain corresponds to 402-599 (NVITLNMHRN…QQLASVVDRL (198 aa)). Residues 600 to 620 (LLCLFCTATLFTIICLLIVPV) traverse the membrane as a helical segment. Asparagine 625 carries an N-linked (GlcNAc...) asparagine glycan.

It belongs to the ligand-gated ion channel (TC 1.A.9) family.

The protein resides in the postsynaptic cell membrane. The protein localises to the cell membrane. In terms of biological role, possible acetylcholine receptor. This is Ligand-gated ion channel 4 (lgc-4) from Caenorhabditis elegans.